Reading from the N-terminus, the 131-residue chain is Beta/delta-urticatoxin-Dm2a (131 aa).

The first 24 residues, M1–A24, serve as a signal peptide directing secretion. Residues S25 to E69 constitute a propeptide that is removed on maturation. Cystine bridges form between C72–C88, C79–C93, C87–C101, C103–C117, C110–C122, and C116–C130.

This sequence belongs to the urticatoxin-2 family. In terms of tissue distribution, expressed in trichomes, that are stiff epidermal hairs located on the surface of petioles and leaves.

It localises to the secreted. Plant defense neurotoxin that causes pain and systemic symptoms in mammals via modulation of voltage-gated sodium channels (Nav). Potent modulator of human Nav1.5/SCN5A (EC(50)=55 nM), Nav1.6/SCN8A (EC(50)=0.86 nM), and Nav1.7/SCN9A (EC(50)=208 nM), where it shifts the activation threshold to more negative potentials and delays fast inactivation. Also shifts the voltage-dependence of steady-state fast inactivation of Nav1.6/SCN8A, but not that of Nav1.5/SCN5A or Nav1.7/SCN9A. On Nav1.7/SCN9A, principally acts by binding to extracellular loops of domain IV (Nav site 3). In vivo, intraplantar injection into mice causes numerous dose-dependent, immediate, and long-lasting spontaneous pain behaviors, while no swelling is observed in the injected paw. At the highest doses tested, systemic symptoms including hypokinesia and hypersalivation are observed. This is Beta/delta-urticatoxin-Dm2a from Dendrocnide moroides (Gympie stinging tree).